The primary structure comprises 507 residues: ATP synthase subunit alpha (507 aa).

169 to 176 provides a ligand contact to ATP; it reads GDRQTGKT.

It belongs to the ATPase alpha/beta chains family. F-type ATPases have 2 components, CF(1) - the catalytic core - and CF(0) - the membrane proton channel. CF(1) has five subunits: alpha(3), beta(3), gamma(1), delta(1), epsilon(1). CF(0) has three main subunits: a(1), b(2) and c(9-12). The alpha and beta chains form an alternating ring which encloses part of the gamma chain. CF(1) is attached to CF(0) by a central stalk formed by the gamma and epsilon chains, while a peripheral stalk is formed by the delta and b chains.

Its subcellular location is the cell membrane. The enzyme catalyses ATP + H2O + 4 H(+)(in) = ADP + phosphate + 5 H(+)(out). Its function is as follows. Produces ATP from ADP in the presence of a proton gradient across the membrane. The alpha chain is a regulatory subunit. The protein is ATP synthase subunit alpha of Desulforudis audaxviator (strain MP104C).